We begin with the raw amino-acid sequence, 514 residues long: L-carnitine/gamma-butyrobetaine antiporter (514 aa).

Residues 1–11 (MSKDNKKAGIE) lie on the Cytoplasmic side of the membrane. A helical transmembrane segment spans residues 12–30 (PKVFFPPLIIVGILCWLTV). Residues 31-42 (RDLDASNEVINA) lie on the Periplasmic side of the membrane. A helical membrane pass occupies residues 43-68 (VFSYVTNVWGWAFEWYMVIMFGGWFW). Over 69–91 (LVFGRYAKKRLGDEKPEFSTASW) the chain is Cytoplasmic. Residues 92–112 (IFMMFASCTSAAVLFWGSIEI) form a helical membrane-spanning segment. At 113-131 (YYYISSPPFGMEGYSAPAK) the chain is on the periplasmic side. The chain crosses the membrane as a helical span at residues 132–154 (EIGLAYSLFHWGPLPWATYSFLS). At 155 to 185 (VAFAYFFFVRKMEVIRPSSTLTPLVGEKHVN) the chain is on the cytoplasmic side. A helical membrane pass occupies residues 186–216 (GLFGTVVDNFYLVALILAMGTSLGLATPLVT). Over 217-230 (ECIQYLFGIPHTLQ) the chain is Periplasmic. The chain crosses the membrane as a helical span at residues 231–249 (LDAIIISCWILLNAICVAF). The Cytoplasmic portion of the chain corresponds to 250 to 251 (GL). A helical membrane pass occupies residues 252-277 (QKGVKIASDVRTYLSFLMLGWVFIVG). Topologically, residues 278 to 311 (GASFIVNYFTDSVGTLLMYMPRMLFYTDPIGKGG) are periplasmic. The chain crosses the membrane as a helical span at residues 312–335 (FPQAWTVFYWAWWVIYAIQMSIFL). The Cytoplasmic segment spans residues 336-347 (ARISKGRTVREL). Residues 348–369 (CLGMVSGLTAGTWLIWTILGGN) traverse the membrane as a helical segment. Residues 370-404 (TLQLIDQNILNIPQLIDQYGVPRAIIETWAALPLS) lie on the Periplasmic side of the membrane. A helical membrane pass occupies residues 405-434 (TATMWGFFILCFIATVTLINACSYTLAMST). At 435–445 (CRSMKEGAEPP) the chain is on the cytoplasmic side. A helical membrane pass occupies residues 446–464 (LLVRIGWSVLVGIIGIILL). Topologically, residues 465–468 (ALGG) are periplasmic. A helical membrane pass occupies residues 469–492 (LKPIQTAIIAGGCPLFFVNIMVTL). Over 493 to 514 (SFIKDAKVHWKDCSPYTQKMTH) the chain is Cytoplasmic.

This sequence belongs to the BCCT transporter (TC 2.A.15) family. CaiT subfamily. As to quaternary structure, homotrimer.

It is found in the cell inner membrane. It catalyses the reaction 4-(trimethylamino)butanoate(in) + (R)-carnitine(out) = 4-(trimethylamino)butanoate(out) + (R)-carnitine(in). Its pathway is amine and polyamine metabolism; carnitine metabolism. Functionally, catalyzes the exchange of L-carnitine for gamma-butyrobetaine. This is L-carnitine/gamma-butyrobetaine antiporter from Proteus mirabilis (strain HI4320).